We begin with the raw amino-acid sequence, 444 residues long: Putative dipeptidase CPC735_015490 (444 aa).

The N-terminal stretch at 1-34 (MSQRTEHNGSWLRNAGSLLSVLACVAVLASPASA) is a signal peptide. Zn(2+)-binding residues include His67, Asp69, and Glu178. Residues Cys118 and Cys207 are joined by a disulfide bond. Substrate is bound at residue His205. Residues His250 and His271 each coordinate Zn(2+). Arg282 and Asp342 together coordinate substrate. An N-linked (GlcNAc...) asparagine glycan is attached at Asn413.

This sequence belongs to the metallo-dependent hydrolases superfamily. Peptidase M19 family. Requires Zn(2+) as cofactor.

The enzyme catalyses an L-aminoacyl-L-amino acid + H2O = 2 an L-alpha-amino acid. Hydrolyzes a wide range of dipeptides. In Coccidioides posadasii (strain C735) (Valley fever fungus), this protein is Putative dipeptidase CPC735_015490.